The sequence spans 510 residues: NAD(P)H-quinone oxidoreductase subunit 2, chloroplastic (510 aa).

Helical transmembrane passes span 26-46, 57-77, 99-119, 124-144, 149-169, 184-204, 227-247, 295-315, 323-343, 354-374, 395-415, 418-438, and 484-504; these read LFDG…ILLL, IPWL…ALLF, IFQV…VEYI, MAIT…MFLC, LITI…LSGY, LLMG…LYGL, PGIS…LSPA, WHLL…LIAI, MLAY…IVGD, YMLF…LFGL, ALSL…AGFF, LYLF…IALV, and MIVC…IIAI.

It belongs to the complex I subunit 2 family. As to quaternary structure, NDH is composed of at least 16 different subunits, 5 of which are encoded in the nucleus.

It localises to the plastid. It is found in the chloroplast thylakoid membrane. The enzyme catalyses a plastoquinone + NADH + (n+1) H(+)(in) = a plastoquinol + NAD(+) + n H(+)(out). It carries out the reaction a plastoquinone + NADPH + (n+1) H(+)(in) = a plastoquinol + NADP(+) + n H(+)(out). Its function is as follows. NDH shuttles electrons from NAD(P)H:plastoquinone, via FMN and iron-sulfur (Fe-S) centers, to quinones in the photosynthetic chain and possibly in a chloroplast respiratory chain. The immediate electron acceptor for the enzyme in this species is believed to be plastoquinone. Couples the redox reaction to proton translocation, and thus conserves the redox energy in a proton gradient. The protein is NAD(P)H-quinone oxidoreductase subunit 2, chloroplastic of Trachelium caeruleum (Blue throatwort).